The primary structure comprises 276 residues: C-type lectin domain family 12 member B (276 aa).

At 1–43 (MSEDMTYATLTFQDSVAAGNNQDRNNLRKRGYPAPSSIWRQAA) the chain is on the cytoplasmic side. Positions 5-10 (MTYATL) match the ITIM motif motif. Tyrosine 7 carries the post-translational modification Phosphotyrosine. A helical; Signal-anchor for type II membrane protein membrane pass occupies residues 44–64 (LGLLTLCVMLLIGLVTLGIMF). The Extracellular portion of the chain corresponds to 65–276 (LQMSSEINSD…AALVKIEDLD (212 aa)). N-linked (GlcNAc...) asparagine glycosylation is found at asparagine 91, asparagine 176, and asparagine 237. The 115-residue stretch at 150–264 (YQTSCYYFAV…CSAEISWICE (115 aa)) folds into the C-type lectin domain. Cystine bridges form between cysteine 172-cysteine 263 and cysteine 242-cysteine 255.

In terms of assembly, homodimer. Interacts (via ITIM motif) with PTPN6. Interacts (via ITIM motif) with PTPN11; this interaction triggers dephosphorylation and activation of PTPN11.

It localises to the cell membrane. Functionally, inhibitory receptor postulated to negatively regulate immune and non-immune functions. Upon phosphorylation, recruits SH2 domain-containing PTPN6 and PTPN11 phosphatases to its ITIM motif and antagonizes activation signals. Although it inhibits KLRK1/NKG2D-mediated signaling, it does not bind known ligands of KLRK1/NKG2D and therefore is not its inhibitory counterpart. May limit activation of myeloid cell subsets in response to infection or tissue inflammation. May protect target cells against natural killer cell-mediated lysis. May negatively regulate cell cycle and differentiation of melanocytes via inactivation of STAT3. This Bos taurus (Bovine) protein is C-type lectin domain family 12 member B (CLEC12B).